Consider the following 408-residue polypeptide: Probable serine/threonine-protein kinase PBL16 (408 aa).

Glycine 2 carries the N-myristoyl glycine lipid modification. Cysteine 4 carries S-palmitoyl cysteine lipidation. The segment at 17–50 (ANAKSESPKEQSPTVEDKHIKEVQKLPSNPKEVE) is disordered. Positions 18-30 (NAKSESPKEQSPT) are enriched in polar residues. Over residues 31–40 (VEDKHIKEVQ) the composition is skewed to basic and acidic residues. Threonine 65 carries the phosphothreonine modification. The region spanning 76 to 360 (FRQDRVLGGG…DIVDSLEPLQ (285 aa)) is the Protein kinase domain. ATP-binding positions include 82-90 (LGGGGFGSV) and lysine 113. A Phosphotyrosine modification is found at tyrosine 159. Aspartate 209 (proton acceptor) is an active-site residue. Phosphoserine occurs at positions 213 and 243. Residues threonine 244 and threonine 249 each carry the phosphothreonine modification. Tyrosine 257 bears the Phosphotyrosine mark.

The protein belongs to the protein kinase superfamily. Ser/Thr protein kinase family. Post-translationally, palmitoylation at Cys-4 and Cys-6 are required for plasma membrane location.

The protein resides in the cell membrane. It carries out the reaction L-seryl-[protein] + ATP = O-phospho-L-seryl-[protein] + ADP + H(+). The catalysed reaction is L-threonyl-[protein] + ATP = O-phospho-L-threonyl-[protein] + ADP + H(+). Its function is as follows. May be involved in plant defense signaling. The protein is Probable serine/threonine-protein kinase PBL16 of Arabidopsis thaliana (Mouse-ear cress).